The following is a 387-amino-acid chain: RNA polymerase II elongation factor ELL3 (387 aa).

Disordered regions lie at residues 127–148 (LTEGTRESESWQDSEDEPEGHP) and 186–275 (LSNR…EEVP). The segment covering 230–239 (SPLQGLSNQD) has biased composition (polar residues). Position 240 is a phosphoserine (Ser-240). A compositionally biased stretch (acidic residues) spans 240-251 (SPEEQDWGQDAD). A compositionally biased stretch (low complexity) spans 257 to 271 (EQSLSVQSASESPSP). The OCEL domain maps to 275–385 (PDYLLQYSTI…LILEFEEKNR (111 aa)).

Belongs to the ELL/occludin family. As to quaternary structure, interacts with AFF4. Component of the super elongation complex (SEC), at least composed of EAF1, EAF2, CDK9, MLLT3/AF9, AFF (AFF1 or AFF4), the P-TEFb complex and ELL (ELL, ELL2 or ELL3). Component of the little elongation complex (LEC), at least composed of ELL (ELL, ELL2 or ELL3), ZC3H8, ICE1 and ICE2.

Its subcellular location is the nucleus. Its function is as follows. Enhancer-binding elongation factor that specifically binds enhancers in embryonic stem cells (ES cells), marks them, and is required for their future activation during stem cell specification. Elongation factor component of the super elongation complex (SEC), a complex required to increase the catalytic rate of RNA polymerase II transcription by suppressing transient pausing by the polymerase at multiple sites along the DNA. Component of the little elongation complex (LEC), a complex required to regulate small nuclear RNA (snRNA) gene transcription by RNA polymerase II and III. Does not only bind to enhancer regions of active genes, but also marks the enhancers that are in a poised or inactive state in ES cells and is required for establishing proper RNA polymerase II occupancy at developmentally regulated genes in a cohesin-dependent manner. Probably required for priming developmentally regulated genes for later recruitment of the super elongation complex (SEC), for transcriptional activation during differentiation. Required for recruitment of P-TEFb within SEC during differentiation. Probably preloaded on germ cell chromatin, suggesting that it may prime gene activation by marking enhancers as early as in the germ cells. Promoting epithelial-mesenchymal transition (EMT). In Rattus norvegicus (Rat), this protein is RNA polymerase II elongation factor ELL3 (Ell3).